Consider the following 127-residue polypeptide: Large ribosomal subunit protein bL17 (127 aa).

The protein belongs to the bacterial ribosomal protein bL17 family. In terms of assembly, part of the 50S ribosomal subunit. Contacts protein L32.

The protein is Large ribosomal subunit protein bL17 of Lactobacillus helveticus (strain DPC 4571).